The primary structure comprises 153 residues: Lipoprotein signal peptidase (153 aa).

A run of 2 helical transmembrane segments spans residues 52 to 72 and 81 to 101; these read ILAG…IGIV and GQML…GNFI. Catalysis depends on residues Asp-111 and Asp-129. Residues 124–144 traverse the membrane as a helical segment; the sequence is IFNIADSSLCVGVILLFIHML.

It belongs to the peptidase A8 family.

The protein resides in the cell membrane. It catalyses the reaction Release of signal peptides from bacterial membrane prolipoproteins. Hydrolyzes -Xaa-Yaa-Zaa-|-(S,diacylglyceryl)Cys-, in which Xaa is hydrophobic (preferably Leu), and Yaa (Ala or Ser) and Zaa (Gly or Ala) have small, neutral side chains.. It functions in the pathway protein modification; lipoprotein biosynthesis (signal peptide cleavage). This protein specifically catalyzes the removal of signal peptides from prolipoproteins. The chain is Lipoprotein signal peptidase from Bacillus velezensis (strain DSM 23117 / BGSC 10A6 / LMG 26770 / FZB42) (Bacillus amyloliquefaciens subsp. plantarum).